The sequence spans 117 residues: uncharacterized protein (117 aa).

3 consecutive transmembrane segments (helical) span residues 32 to 52 (VSSSSFVSSSLIFCKCVVTVV), 56 to 76 (VGVALLGIVGRVVPLYTVTLL), and 87 to 107 (LSWCSMTNFCELFFYFFSFFF).

It localises to the membrane. This is an uncharacterized protein from Saccharomyces cerevisiae (strain ATCC 204508 / S288c) (Baker's yeast).